A 227-amino-acid chain; its full sequence is tRNA (guanine-N(7)-)-methyltransferase (227 aa).

Residues E60, E85, D112, and D135 each coordinate S-adenosyl-L-methionine. Residue D135 is part of the active site. Residues K139, D171, and 206-209 (TKFE) each bind substrate.

This sequence belongs to the class I-like SAM-binding methyltransferase superfamily. TrmB family.

It carries out the reaction guanosine(46) in tRNA + S-adenosyl-L-methionine = N(7)-methylguanosine(46) in tRNA + S-adenosyl-L-homocysteine. It functions in the pathway tRNA modification; N(7)-methylguanine-tRNA biosynthesis. Its function is as follows. Catalyzes the formation of N(7)-methylguanine at position 46 (m7G46) in tRNA. This is tRNA (guanine-N(7)-)-methyltransferase from Thiobacillus denitrificans (strain ATCC 25259 / T1).